The sequence spans 457 residues: Siroheme synthase (457 aa).

Positions 1–204 are precorrin-2 dehydrogenase /sirohydrochlorin ferrochelatase; that stretch reads MDHLPIFCQL…ADEKAVNATT (204 aa). Residues 22 to 23 and 43 to 44 each bind NAD(+); these read DV and LT. Residue Ser128 is modified to Phosphoserine. The segment at 216-457 is uroporphyrinogen-III C-methyltransferase; the sequence is GEVVLVGAGP…RDKLNWFSSH (242 aa). Pro225 is an S-adenosyl-L-methionine binding site. The active-site Proton acceptor is Asp248. Lys270 serves as the catalytic Proton donor. S-adenosyl-L-methionine is bound by residues 301-303, Ile306, 331-332, Met382, and Gly411; these read GGD and TA.

In the N-terminal section; belongs to the precorrin-2 dehydrogenase / sirohydrochlorin ferrochelatase family. This sequence in the C-terminal section; belongs to the precorrin methyltransferase family.

The enzyme catalyses uroporphyrinogen III + 2 S-adenosyl-L-methionine = precorrin-2 + 2 S-adenosyl-L-homocysteine + H(+). The catalysed reaction is precorrin-2 + NAD(+) = sirohydrochlorin + NADH + 2 H(+). It catalyses the reaction siroheme + 2 H(+) = sirohydrochlorin + Fe(2+). The protein operates within cofactor biosynthesis; adenosylcobalamin biosynthesis; precorrin-2 from uroporphyrinogen III: step 1/1. It participates in cofactor biosynthesis; adenosylcobalamin biosynthesis; sirohydrochlorin from precorrin-2: step 1/1. It functions in the pathway porphyrin-containing compound metabolism; siroheme biosynthesis; precorrin-2 from uroporphyrinogen III: step 1/1. Its pathway is porphyrin-containing compound metabolism; siroheme biosynthesis; siroheme from sirohydrochlorin: step 1/1. The protein operates within porphyrin-containing compound metabolism; siroheme biosynthesis; sirohydrochlorin from precorrin-2: step 1/1. In terms of biological role, multifunctional enzyme that catalyzes the SAM-dependent methylations of uroporphyrinogen III at position C-2 and C-7 to form precorrin-2 via precorrin-1. Then it catalyzes the NAD-dependent ring dehydrogenation of precorrin-2 to yield sirohydrochlorin. Finally, it catalyzes the ferrochelation of sirohydrochlorin to yield siroheme. The polypeptide is Siroheme synthase (Salmonella arizonae (strain ATCC BAA-731 / CDC346-86 / RSK2980)).